Here is a 65-residue protein sequence, read N- to C-terminus: Metallothionein-like protein type 3 (65 aa).

The protein belongs to the metallothionein superfamily. Type 15 family.

In terms of biological role, metallothioneins have a high content of cysteine residues that bind various heavy metals. The chain is Metallothionein-like protein type 3 from Musa acuminata (Banana).